The following is a 75-amino-acid chain: Putative primary metabolism protein HVA1 (75 aa).

Positions 1 to 13 (MSVQDKQGQNINV) are enriched in polar residues. 2 disordered regions span residues 1 to 24 (MSVQ…YRGG) and 40 to 75 (AAEK…DKQK).

Functionally, may play a role in primary metabolism. This Cryptococcus neoformans var. grubii serotype A (strain H99 / ATCC 208821 / CBS 10515 / FGSC 9487) (Filobasidiella neoformans var. grubii) protein is Putative primary metabolism protein HVA1.